The sequence spans 224 residues: Zinc finger C4H2 domain-containing protein (224 aa).

Residues L11–L104 adopt a coiled-coil conformation. A C4H2-type zinc finger spans residues C189 to C206.

As to expression, expressed in fetal tissues, including in brain, intestine, lung, kidney and muscle. Isoform 1 is expressed in numerous fetal brain regions. Isoform 3 is highly expressed in numerous fetal brain regions and spinal cord.

It localises to the cytoplasm. It is found in the nucleus. The protein resides in the postsynaptic cell membrane. Functionally, plays a role in interneurons differentiation. Involved in neuronal development and in neuromuscular junction formation. The chain is Zinc finger C4H2 domain-containing protein (ZC4H2) from Homo sapiens (Human).